The chain runs to 431 residues: Cytochrome c oxidase subunit 3 (431 aa).

Transmembrane regions (helical) follow at residues 70–90 (IAPL…FGVI), 96–116 (FVIA…SIVF), 132–152 (LVMG…SFFW), 176–196 (VYSY…SGAI), 321–341 (LYFT…EYYF), 356–376 (FLLT…IGII), and 408–428 (LFYW…IYWW).

It belongs to the cytochrome c oxidase subunit 3 family. As to quaternary structure, component of the cytochrome c oxidase (complex IV, CIV), a multisubunit enzyme composed of a catalytic core of 3 subunits and several supernumerary subunits. The complex exists as a monomer or a dimer and forms supercomplexes (SCs) in the inner mitochondrial membrane with ubiquinol-cytochrome c oxidoreductase (cytochrome b-c1 complex, complex III, CIII).

It is found in the mitochondrion inner membrane. The catalysed reaction is 4 Fe(II)-[cytochrome c] + O2 + 8 H(+)(in) = 4 Fe(III)-[cytochrome c] + 2 H2O + 4 H(+)(out). Its function is as follows. Component of the cytochrome c oxidase, the last enzyme in the mitochondrial electron transport chain which drives oxidative phosphorylation. The respiratory chain contains 3 multisubunit complexes succinate dehydrogenase (complex II, CII), ubiquinol-cytochrome c oxidoreductase (cytochrome b-c1 complex, complex III, CIII) and cytochrome c oxidase (complex IV, CIV), that cooperate to transfer electrons derived from NADH and succinate to molecular oxygen, creating an electrochemical gradient over the inner membrane that drives transmembrane transport and the ATP synthase. Cytochrome c oxidase is the component of the respiratory chain that catalyzes the reduction of oxygen to water. Electrons originating from reduced cytochrome c in the intermembrane space (IMS) are transferred via the dinuclear copper A center (CU(A)) of subunit 2 and heme A of subunit 1 to the active site in subunit 1, a binuclear center (BNC) formed by heme A3 and copper B (CU(B)). The BNC reduces molecular oxygen to 2 water molecules using 4 electrons from cytochrome c in the IMS and 4 protons from the mitochondrial matrix. The polypeptide is Cytochrome c oxidase subunit 3 (cox3) (Dictyostelium citrinum (Slime mold)).